A 147-amino-acid polypeptide reads, in one-letter code: Hemoglobin subunit epsilon (147 aa).

The Globin domain occupies 3 to 147 (HFTAEEKATI…VATALAHKYH (145 aa)). Residues serine 14 and serine 51 each carry the phosphoserine modification. Heme b contacts are provided by histidine 64 and histidine 93.

The protein belongs to the globin family. Heterotetramer of two alpha chains and two epsilon chains in early embryonic hemoglobin Gower-2; two zeta chains and two epsilon chains in early embryonic hemoglobin Gower-1. As to expression, red blood cells.

Functionally, the epsilon chain is a beta-type chain of early mammalian embryonic hemoglobin. The protein is Hemoglobin subunit epsilon (HBE1) of Daubentonia madagascariensis (Aye-aye).